A 265-amino-acid polypeptide reads, in one-letter code: GTP cyclohydrolase FolE2 (265 aa).

It belongs to the GTP cyclohydrolase IV family.

It carries out the reaction GTP + H2O = 7,8-dihydroneopterin 3'-triphosphate + formate + H(+). It participates in cofactor biosynthesis; 7,8-dihydroneopterin triphosphate biosynthesis; 7,8-dihydroneopterin triphosphate from GTP: step 1/1. Its function is as follows. Converts GTP to 7,8-dihydroneopterin triphosphate. This is GTP cyclohydrolase FolE2 from Bordetella bronchiseptica (strain ATCC BAA-588 / NCTC 13252 / RB50) (Alcaligenes bronchisepticus).